Here is a 131-residue protein sequence, read N- to C-terminus: Lymphocyte antigen 6C1 (131 aa).

An N-terminal signal peptide occupies residues 1 to 26; it reads MDTSHTTKSCVLILLVALLCAERAQG. Residues 27 to 115 form the UPAR/Ly6 domain; the sequence is LQCYECYGVP…PTAGSTWTMA (89 aa). 5 disulfides stabilise this stretch: cysteine 29–cysteine 53, cysteine 32–cysteine 41, cysteine 46–cysteine 74, cysteine 78–cysteine 95, and cysteine 96–cysteine 101. Glycine 109 carries GPI-anchor amidated glycine lipidation. Residues 110–131 constitute a propeptide, removed in mature form; sequence STWTMAGVLLFSLSSVVLQTLL.

It is found in the cell membrane. The polypeptide is Lymphocyte antigen 6C1 (Ly6c1) (Mus musculus (Mouse)).